A 244-amino-acid polypeptide reads, in one-letter code: tRNA pseudouridine synthase A (244 aa).

Residue Asp52 is the Nucleophile of the active site. Tyr111 is a substrate binding site.

The protein belongs to the tRNA pseudouridine synthase TruA family. In terms of assembly, homodimer.

It catalyses the reaction uridine(38/39/40) in tRNA = pseudouridine(38/39/40) in tRNA. Functionally, formation of pseudouridine at positions 38, 39 and 40 in the anticodon stem and loop of transfer RNAs. The chain is tRNA pseudouridine synthase A from Thermosipho melanesiensis (strain DSM 12029 / CIP 104789 / BI429).